The following is a 251-amino-acid chain: CDP-diacylglycerol pyrophosphatase (251 aa).

A helical membrane pass occupies residues glycine 5–phenylalanine 25.

Belongs to the Cdh family.

The protein resides in the cell inner membrane. The catalysed reaction is a CDP-1,2-diacyl-sn-glycerol + H2O = a 1,2-diacyl-sn-glycero-3-phosphate + CMP + 2 H(+). It functions in the pathway phospholipid metabolism; CDP-diacylglycerol degradation; phosphatidate from CDP-diacylglycerol: step 1/1. The sequence is that of CDP-diacylglycerol pyrophosphatase from Salmonella typhi.